The primary structure comprises 257 residues: ATP synthase subunit a (257 aa).

The propeptide at 1 to 4 (MFIT) is removed in mature form. 8 helical membrane passes run 27-47 (FSNF…LAII), 58-78 (IVPQ…LNLV), 93-113 (YFPF…LRLI), 122-142 (QLIF…ILGL), 149-169 (VFGL…LVLI), 189-209 (IIAG…FMGL), 214-234 (FIIG…EFGI), and 236-256 (FIQA…SLNL).

The protein belongs to the ATPase A chain family. As to quaternary structure, F-type ATPases have 2 components, CF(1) - the catalytic core - and CF(0) - the membrane proton channel. CF(1) has five subunits: alpha(3), beta(3), gamma(1), delta(1), epsilon(1). CF(0) has three main subunits: a, b and c.

The protein localises to the mitochondrion inner membrane. Mitochondrial membrane ATP synthase (F(1)F(0) ATP synthase or Complex V) produces ATP from ADP in the presence of a proton gradient across the membrane which is generated by electron transport complexes of the respiratory chain. F-type ATPases consist of two structural domains, F(1) - containing the extramembraneous catalytic core and F(0) - containing the membrane proton channel, linked together by a central stalk and a peripheral stalk. During catalysis, ATP synthesis in the catalytic domain of F(1) is coupled via a rotary mechanism of the central stalk subunits to proton translocation. Key component of the proton channel; it may play a direct role in the translocation of protons across the membrane. The protein is ATP synthase subunit a (atp6) of Schizosaccharomyces pombe (strain 972 / ATCC 24843) (Fission yeast).